The primary structure comprises 656 residues: Threonine--tRNA ligase (656 aa).

In terms of domain architecture, TGS spans 1–64; it reads MAEAASLTFP…ERSGKIEIIT (64 aa). The interval 246–548 is catalytic; it reads DHRRLGREMD…LIENYAGHFP (303 aa). 3 residues coordinate Zn(2+): Cys342, His393, and His525.

It belongs to the class-II aminoacyl-tRNA synthetase family. In terms of assembly, homodimer. It depends on Zn(2+) as a cofactor.

It localises to the cytoplasm. It carries out the reaction tRNA(Thr) + L-threonine + ATP = L-threonyl-tRNA(Thr) + AMP + diphosphate + H(+). Functionally, catalyzes the attachment of threonine to tRNA(Thr) in a two-step reaction: L-threonine is first activated by ATP to form Thr-AMP and then transferred to the acceptor end of tRNA(Thr). Also edits incorrectly charged L-seryl-tRNA(Thr). The sequence is that of Threonine--tRNA ligase from Chelativorans sp. (strain BNC1).